Reading from the N-terminus, the 1245-residue chain is Trafficking protein particle complex II-specific subunit 130 homolog (1245 aa).

Disordered regions lie at residues 488 to 524 and 884 to 903; these read GDGS…TSLP and HVGG…TRKV. Composition is skewed to low complexity over residues 495–507 and 888–898; these read ANSK…SASN and TDASKTSSSST.

It belongs to the TMEM1 family. Part of the multisubunit TRAPP (transport protein particle) II complex composed of BET3, BET5, TRS20, TRS23, TRS31, TRS33, TRS65, TRS85, TRS120 and TRS130.

It localises to the golgi apparatus. Its subcellular location is the trans-Golgi network. The protein resides in the early endosome. Functionally, specific subunit of the TRAPP II complex, a highly conserved vesicle tethering complex that is required for the proper transport of proteins in post-Golgi trafficking pathways to the growing cell plate in mitotic active cells. The chain is Trafficking protein particle complex II-specific subunit 130 homolog from Oryza sativa subsp. japonica (Rice).